A 282-amino-acid chain; its full sequence is Formamidopyrimidine-DNA glycosylase (282 aa).

Pro2 serves as the catalytic Schiff-base intermediate with DNA. Residue Glu3 is the Proton donor of the active site. The active-site Proton donor; for beta-elimination activity is Lys58. DNA contacts are provided by His96, Arg115, and Lys152. Residues 238–272 (HVYGRGGQPCERCGEEILKTVLGGRGTHYCPSCQN) form an FPG-type zinc finger. Arg262 functions as the Proton donor; for delta-elimination activity in the catalytic mechanism.

This sequence belongs to the FPG family. Monomer. The cofactor is Zn(2+).

The catalysed reaction is Hydrolysis of DNA containing ring-opened 7-methylguanine residues, releasing 2,6-diamino-4-hydroxy-5-(N-methyl)formamidopyrimidine.. It catalyses the reaction 2'-deoxyribonucleotide-(2'-deoxyribose 5'-phosphate)-2'-deoxyribonucleotide-DNA = a 3'-end 2'-deoxyribonucleotide-(2,3-dehydro-2,3-deoxyribose 5'-phosphate)-DNA + a 5'-end 5'-phospho-2'-deoxyribonucleoside-DNA + H(+). In terms of biological role, involved in base excision repair of DNA damaged by oxidation or by mutagenic agents. Acts as a DNA glycosylase that recognizes and removes damaged bases. Has a preference for oxidized purines, such as 7,8-dihydro-8-oxoguanine (8-oxoG). Has AP (apurinic/apyrimidinic) lyase activity and introduces nicks in the DNA strand. Cleaves the DNA backbone by beta-delta elimination to generate a single-strand break at the site of the removed base with both 3'- and 5'-phosphates. In Corynebacterium aurimucosum (strain ATCC 700975 / DSM 44827 / CIP 107346 / CN-1) (Corynebacterium nigricans), this protein is Formamidopyrimidine-DNA glycosylase.